Here is a 66-residue protein sequence, read N- to C-terminus: Toxin Boma6a (66 aa).

An LCN-type CS-alpha/beta domain is found at 2-64 (RDAYIAQNYN…VPIKVEGKCH (63 aa)). Disulfide bonds link C12-C63, C16-C36, C22-C46, and C26-C48.

Belongs to the long (4 C-C) scorpion toxin superfamily. Sodium channel inhibitor family. Alpha subfamily. As to expression, expressed by the venom gland.

The protein resides in the secreted. In terms of biological role, alpha toxins bind voltage-independently at site-3 of sodium channels (Nav) and inhibit the inactivation of the activated channels, thereby blocking neuronal transmission. This is Toxin Boma6a from Buthus occitanus mardochei (Moroccan scorpion).